The following is a 387-amino-acid chain: 3-ketoacyl-CoA thiolase (387 aa).

Catalysis depends on cysteine 91, which acts as the Acyl-thioester intermediate. Catalysis depends on proton acceptor residues histidine 343 and cysteine 373.

It belongs to the thiolase-like superfamily. Thiolase family. In terms of assembly, heterotetramer of two alpha chains (FadB) and two beta chains (FadA).

The protein resides in the cytoplasm. The enzyme catalyses an acyl-CoA + acetyl-CoA = a 3-oxoacyl-CoA + CoA. The protein operates within lipid metabolism; fatty acid beta-oxidation. Its function is as follows. Catalyzes the final step of fatty acid oxidation in which acetyl-CoA is released and the CoA ester of a fatty acid two carbons shorter is formed. The chain is 3-ketoacyl-CoA thiolase from Vibrio cholerae serotype O1 (strain ATCC 39541 / Classical Ogawa 395 / O395).